We begin with the raw amino-acid sequence, 156 residues long: Snaclec A15 (156 aa).

The N-terminal stretch at 1–23 (MGRFIFVRFGLLVVFLSLSGTGA) is a signal peptide. Cystine bridges form between cysteine 27–cysteine 38, cysteine 55–cysteine 152, and cysteine 127–cysteine 144. Positions 34–153 (YDQHCYKAFD…CGDDYPFVCK (120 aa)) constitute a C-type lectin domain. Asparagine 141 carries an N-linked (GlcNAc...) asparagine glycan.

It belongs to the snaclec family. Heterodimer; disulfide-linked. As to expression, expressed by the venom gland.

Its subcellular location is the secreted. Its function is as follows. Interferes with one step of hemostasis (modulation of platelet aggregation, or coagulation cascade, for example). This is Snaclec A15 from Macrovipera lebetinus (Levantine viper).